Consider the following 233-residue polypeptide: Large ribosomal subunit protein uL1 (233 aa).

The protein belongs to the universal ribosomal protein uL1 family. Part of the 50S ribosomal subunit.

Its function is as follows. Binds directly to 23S rRNA. The L1 stalk is quite mobile in the ribosome, and is involved in E site tRNA release. In terms of biological role, protein L1 is also a translational repressor protein, it controls the translation of the L11 operon by binding to its mRNA. The protein is Large ribosomal subunit protein uL1 of Aeromonas salmonicida (strain A449).